The following is a 475-amino-acid chain: MASNPLDNNMPTTPVEEKIPVASYSPSSSGSSSGASLLVDIMCGSKETEDEEVDSDEWDKPETENISDLDERSEMVRYLRASGYAKFLEKYLIEEELPVRSILKKLGINLPSALEEFEDIDLLPLLKEVLKREVARRIKLPHFNTFEDVVNLLKKAKNVVVLVGAGISTSLGILDFRSDNGFYARLARHGLSEPSEMFDIHTFRENPEIFYTFARDLLPETNHYSPSHAFIRLLEKKNKLSTLFTQNIDNLEKKTGLSDNKIIQCHGSFATATCIKCKHKVDGSELYEDIRNQRVSYCNECGKPPLKLRRVGQNKKEKHYFSDGDSESSEDDLAQPGIMKPDITFFGEALPDSFFNKVGSGELEETDLLICIGTSLKVAPVSELISVIPPTTPQIYISRTPVRHTQFDVNFLSPYCDWVIVEICKRAGWLNELQALCDLPECHSGSKTRAFETDLDIKFEEPSTYHITSTTNGSC.

Over residues 1 to 12 (MASNPLDNNMPT) the composition is skewed to polar residues. A disordered region spans residues 1–35 (MASNPLDNNMPTTPVEEKIPVASYSPSSSGSSSGA). The span at 20-35 (PVASYSPSSSGSSSGA) shows a compositional bias: low complexity. Ser-55 is subject to Phosphoserine. The Deacetylase sirtuin-type domain maps to 139 to 436 (KLPHFNTFED…AGWLNELQAL (298 aa)). NAD(+) contacts are provided by residues 164–183 (GAGISTSLGILDFRSDNGFY) and 246–249 (QNID). His-266 acts as the Proton acceptor in catalysis. 4 residues coordinate Zn(2+): Cys-274, Cys-277, Cys-298, and Cys-301. Residues 373-375 (GTS), 398-400 (SRT), and Cys-416 each bind NAD(+).

The protein belongs to the sirtuin family. Class I subfamily. Zn(2+) is required as a cofactor.

The protein resides in the nucleus. The protein localises to the chromosome. It is found in the centromere. It localises to the telomere. It carries out the reaction N(6)-acetyl-L-lysyl-[protein] + NAD(+) + H2O = 2''-O-acetyl-ADP-D-ribose + nicotinamide + L-lysyl-[protein]. Functionally, involved in silencing within the mating-type region, at the telomeres, and according to PubMed:12867036 also within centromeric DNA regions. Required for the localization of swi6 to the telomeres, silent mating type region, and according to PubMed:12867036 to the centromeric DNA regions. According to PubMed:15545655 not required for the localization of swi6 to centromeric foci. Deacetylates histone H3 on 'Lys-9' and 'Lys-16' of histone H4. This has a direct role in heterochromatin assembly. In Schizosaccharomyces pombe (strain 972 / ATCC 24843) (Fission yeast), this protein is NAD-dependent histone deacetylase sir2 (sir2).